We begin with the raw amino-acid sequence, 412 residues long: Phosphoglycerate kinase 1 (412 aa).

Substrate is bound by residues 28–30, 65–68, arginine 122, and arginine 162; these read DFN and HQGR. ATP-binding positions include glutamate 336 and 361 to 364; that span reads GGHT.

This sequence belongs to the phosphoglycerate kinase family. As to quaternary structure, monomer.

Its subcellular location is the cytoplasm. It catalyses the reaction (2R)-3-phosphoglycerate + ATP = (2R)-3-phospho-glyceroyl phosphate + ADP. The protein operates within carbohydrate degradation; glycolysis; pyruvate from D-glyceraldehyde 3-phosphate: step 2/5. In Methanosarcina acetivorans (strain ATCC 35395 / DSM 2834 / JCM 12185 / C2A), this protein is Phosphoglycerate kinase 1.